The chain runs to 235 residues: Segregation and condensation protein A (235 aa).

The protein belongs to the ScpA family. Component of a cohesin-like complex composed of ScpA, ScpB and the Smc homodimer, in which ScpA and ScpB bind to the head domain of Smc. The presence of the three proteins is required for the association of the complex with DNA.

Its subcellular location is the cytoplasm. Its function is as follows. Participates in chromosomal partition during cell division. May act via the formation of a condensin-like complex containing Smc and ScpB that pull DNA away from mid-cell into both cell halves. The chain is Segregation and condensation protein A from Streptococcus equi subsp. zooepidemicus (strain MGCS10565).